The following is a 420-amino-acid chain: MQAEIIAVGTEILLGQITNTNSTYIARGLAELGIDSYYQTVVGDNRQRLSTVIEIAAQRNDLVILTGGLGPTKDDLTKQTLAHYLNVALVEDQAAMQKITAWFATNDKVMTANNRLQALYPAGAQPLTNHNGMAVGAFYQSENSADFLLLPGPPRELAVMFDSEAKPKLAAAYGEQAQIYSRVMRFYGISESELATRLQPLIDEQQAVTIAPYAKTNEVTLRLSAQAMTETAARGMIDKVDHQIKATVGPYFYGYGDDNSLVTTVINQMIAAKLSITAAESLTAGLFQSTIGSVSGVSAIFPGGFVTYANEAKHQLVNVPQAIIDAEGVVSEATAKAMASGAKQQLNTDVGISFTGVAGPGTLGGQPAGTVWIGLAYRDRPVKAKQYHFAGNRQQIRERSVMAGLDLLRHALNEDTDLKK.

The protein belongs to the CinA family.

The polypeptide is Putative competence-damage inducible protein (Lactiplantibacillus plantarum (strain ATCC BAA-793 / NCIMB 8826 / WCFS1) (Lactobacillus plantarum)).